Here is a 166-residue protein sequence, read N- to C-terminus: Specificity protein transcription factor 2 (166 aa).

The segment at 17–45 (SYHHSLPSISPPDSPASTSASSSSSSIGA) is disordered. The span at 31–42 (PASTSASSSSSS) shows a compositional bias: low complexity. 3 consecutive C2H2-type zinc fingers follow at residues 77–101 (HLCS…LRKH), 107–131 (FVCD…KRTH), and 137–160 (FACK…TSVH).

Belongs to the Sp1 C2H2-type zinc-finger protein family.

Its function is as follows. Transcription factor. Probably acts downstream of the Wnt signaling pathway. The chain is Specificity protein transcription factor 2 from Caenorhabditis elegans.